Consider the following 210-residue polypeptide: MIHDKVFKGTTTVGLVCKDGVVLATEKRATMGNFIASRRAKKIYKITDRIAMTTAGSVGDAQFLARLIKVETNLYTIRKEEEPTVKAVATLVSNLLNSVRYFPYLVQLLIGGVDKTGAKIYSIDPIGGAIEEIDIVATGSGSPMAYGVLEDNYRKDINVDEAVELAIRAIYSAMKRDSASGDGIDVVKITEKEYVELTPEEIEAILEKLR.

Positions 1-9 are cleaved as a propeptide — removed in mature form; by autocatalysis; sequence MIHDKVFKG. T10 functions as the Nucleophile in the catalytic mechanism.

This sequence belongs to the peptidase T1B family. In terms of assembly, the 20S proteasome core is composed of 14 alpha and 14 beta subunits that assemble into four stacked heptameric rings, resulting in a barrel-shaped structure. The two inner rings, each composed of seven catalytic beta subunits, are sandwiched by two outer rings, each composed of seven alpha subunits. The catalytic chamber with the active sites is on the inside of the barrel. Has a gated structure, the ends of the cylinder being occluded by the N-termini of the alpha-subunits. Is capped at one or both ends by the proteasome regulatory ATPase, PAN.

It localises to the cytoplasm. It carries out the reaction Cleavage of peptide bonds with very broad specificity.. With respect to regulation, the formation of the proteasomal ATPase PAN-20S proteasome complex, via the docking of the C-termini of PAN into the intersubunit pockets in the alpha-rings, triggers opening of the gate for substrate entry. Interconversion between the open-gate and close-gate conformations leads to a dynamic regulation of the 20S proteasome proteolysis activity. Its function is as follows. Component of the proteasome core, a large protease complex with broad specificity involved in protein degradation. This chain is Proteasome subunit beta, found in Ferroglobus placidus (strain DSM 10642 / AEDII12DO).